Reading from the N-terminus, the 317-residue chain is Transaldolase 2 (317 aa).

Residue lysine 132 is the Schiff-base intermediate with substrate of the active site.

This sequence belongs to the transaldolase family. Type 1 subfamily. As to quaternary structure, homodimer.

It is found in the cytoplasm. The catalysed reaction is D-sedoheptulose 7-phosphate + D-glyceraldehyde 3-phosphate = D-erythrose 4-phosphate + beta-D-fructose 6-phosphate. It functions in the pathway carbohydrate degradation; pentose phosphate pathway; D-glyceraldehyde 3-phosphate and beta-D-fructose 6-phosphate from D-ribose 5-phosphate and D-xylulose 5-phosphate (non-oxidative stage): step 2/3. In terms of biological role, transaldolase is important for the balance of metabolites in the pentose-phosphate pathway. In Pectobacterium atrosepticum (strain SCRI 1043 / ATCC BAA-672) (Erwinia carotovora subsp. atroseptica), this protein is Transaldolase 2.